The following is a 633-amino-acid chain: MTTPKKTAKTSGNEARELADLSEDIGIRFKYPNSERVYLQGSRDDIRVPLREIRQDDTYTAQGTEANPPIPVYDTSGVYGDPAAHIDLKQGLPHIRTAWLDERGDTEILPKLSSEYGIERAHDPKTAHLRFNQITRPRRAKAGRNVTQLHYARQGIITPEMEFVAIRERLKLDELSQKPEYAKLLKQHAGQSFGANIPTHPDQITPEFVRREIAAGRAIIPANINHPELEPMIIGRNFRVKINGNLGNSAVTSSLTEEVEKMVWSLRWGADTIMDLSTGAHIHETREWIIRNAPVPIGTVPIYQALEKTGGIAEDLTWDLFRDTLIEQAEQGVDYFTIHAGVLLRYVPMTANRLTGIVSRGGSIMAKWCLAHHRENFLYTHFDEICEIMKAYDVSFSLGDGLRPGCIADANDESQFAELHTLGELTSKAWKHDVQVMIEGPGHVPLQRVKENMTEELQHCFEAPFYTLGPLVTDIAPGYDHITSGIGAANIGWYGTAMLCYVTPKEHLGLPDKEDVRTGIITYKLAAHAADLAKGWPGAQLRDNALSKARFEFRWRDQFRLSLDPERAESFHDETLPAEGAKIAHFCSMCGPKFCSMKITQEVRDYADKQKAQRQGMEEKAVEFVKKGAKIYS.

Substrate-binding positions include Asn-245, Met-274, Tyr-303, His-339, 359–361 (SRG), 400–403 (DGLR), and Glu-439. A Zn(2+)-binding site is contributed by His-443. Residue Tyr-466 participates in substrate binding. Zn(2+) is bound at residue His-507. Residues Cys-587, Cys-590, and Cys-595 each contribute to the [4Fe-4S] cluster site.

Belongs to the ThiC family. As to quaternary structure, homodimer. It depends on [4Fe-4S] cluster as a cofactor.

It carries out the reaction 5-amino-1-(5-phospho-beta-D-ribosyl)imidazole + S-adenosyl-L-methionine = 4-amino-2-methyl-5-(phosphooxymethyl)pyrimidine + CO + 5'-deoxyadenosine + formate + L-methionine + 3 H(+). The protein operates within cofactor biosynthesis; thiamine diphosphate biosynthesis. Its function is as follows. Catalyzes the synthesis of the hydroxymethylpyrimidine phosphate (HMP-P) moiety of thiamine from aminoimidazole ribotide (AIR) in a radical S-adenosyl-L-methionine (SAM)-dependent reaction. The protein is Phosphomethylpyrimidine synthase of Neisseria meningitidis serogroup C (strain 053442).